The following is a 280-amino-acid chain: Diaminopimelate epimerase (280 aa).

Substrate-binding residues include Asn12, Gln45, and Asn65. Cys74 serves as the catalytic Proton donor. Substrate-binding positions include Gly75–Asn76, Asn163, Asn196, and Glu214–Arg215. Cys223 (proton acceptor) is an active-site residue. Position 224 to 225 (Gly224 to Thr225) interacts with substrate.

Belongs to the diaminopimelate epimerase family. In terms of assembly, homodimer.

It is found in the cytoplasm. It catalyses the reaction (2S,6S)-2,6-diaminopimelate = meso-2,6-diaminopimelate. It participates in amino-acid biosynthesis; L-lysine biosynthesis via DAP pathway; DL-2,6-diaminopimelate from LL-2,6-diaminopimelate: step 1/1. Catalyzes the stereoinversion of LL-2,6-diaminopimelate (L,L-DAP) to meso-diaminopimelate (meso-DAP), a precursor of L-lysine and an essential component of the bacterial peptidoglycan. The polypeptide is Diaminopimelate epimerase (Shewanella sediminis (strain HAW-EB3)).